The following is a 137-amino-acid chain: Translation initiation factor 2 subunit beta (137 aa).

The protein belongs to the eIF-2-beta/eIF-5 family. As to quaternary structure, heterotrimer composed of an alpha, a beta and a gamma chain.

Its function is as follows. eIF-2 functions in the early steps of protein synthesis by forming a ternary complex with GTP and initiator tRNA. In Archaeoglobus fulgidus (strain ATCC 49558 / DSM 4304 / JCM 9628 / NBRC 100126 / VC-16), this protein is Translation initiation factor 2 subunit beta (eif2b).